Consider the following 480-residue polypeptide: Ribosome assembly protein rrb1 (480 aa).

2 disordered regions span residues 1–78 and 155–176; these read MSKR…WLPG and QHDENDDASDNSDVEEDPILEH. Composition is skewed to acidic residues over residues 28-52 and 158-172; these read VDTEMGEFEDAYEDEIESEEEYIEA and ENDDASDNSDVEEDP. Phosphoserine occurs at positions 163 and 166. WD repeat units lie at residues 183–225, 289–329, 334–375, 385–425, and 446–480; these read GACN…RSLD, SHTA…KTSA, AHPG…SSSS, WHRA…DEEE, and MGQQEIKEMHWHRQIPGTIVSTAMTGINVFKTITF.

As to quaternary structure, associates with ribosomal protein L3.

Its subcellular location is the cytoplasm. It localises to the nucleus. The protein resides in the nucleolus. Its function is as follows. Involved in regulation of L3 expression and stability and plays a role in early 60S ribosomal subunit assembly. May be required for proper assembly of pre-ribosomal particles during early ribosome biogenesis, presumably by targeting L3 onto the 35S precursor rRNA. This chain is Ribosome assembly protein rrb1 (rrb1), found in Schizosaccharomyces pombe (strain 972 / ATCC 24843) (Fission yeast).